A 792-amino-acid polypeptide reads, in one-letter code: Phenylalanine--tRNA ligase beta subunit (792 aa).

The tRNA-binding domain occupies 39-154; the sequence is LYSFASVITA…EATPLGEDLA (116 aa). The B5 domain maps to 403–480; the sequence is RELKEVALRP…ESWNIETQNP (78 aa). Mg(2+) is bound by residues Asp456, Asp462, Glu465, and Glu466. The FDX-ACB domain maps to 695-791; the sequence is AIYPSSFRDL…LLTDTKGTIN (97 aa).

The protein belongs to the phenylalanyl-tRNA synthetase beta subunit family. Type 1 subfamily. As to quaternary structure, tetramer of two alpha and two beta subunits. Requires Mg(2+) as cofactor.

It localises to the cytoplasm. It carries out the reaction tRNA(Phe) + L-phenylalanine + ATP = L-phenylalanyl-tRNA(Phe) + AMP + diphosphate + H(+). This chain is Phenylalanine--tRNA ligase beta subunit (pheT), found in Chlamydia pneumoniae (Chlamydophila pneumoniae).